We begin with the raw amino-acid sequence, 544 residues long: Chaperonin GroEL 1 (544 aa).

Residues 30-33 (TLGP), lysine 51, 87-91 (DGTTT), glycine 415, 479-481 (NAA), and aspartate 495 contribute to the ATP site.

This sequence belongs to the chaperonin (HSP60) family. Forms a cylinder of 14 subunits composed of two heptameric rings stacked back-to-back. Interacts with the co-chaperonin GroES.

The protein localises to the cytoplasm. It catalyses the reaction ATP + H2O + a folded polypeptide = ADP + phosphate + an unfolded polypeptide.. Its function is as follows. Together with its co-chaperonin GroES, plays an essential role in assisting protein folding. The GroEL-GroES system forms a nano-cage that allows encapsulation of the non-native substrate proteins and provides a physical environment optimized to promote and accelerate protein folding. In Vibrio cholerae serotype O1 (strain ATCC 39315 / El Tor Inaba N16961), this protein is Chaperonin GroEL 1.